The sequence spans 74 residues: Coleoptericin (74 aa).

Residues 1 to 74 form a disordered region; that stretch reads SLQGGAPNFP…TWHVGGTYRR (74 aa).

The protein belongs to the coleoptericin family.

The protein resides in the secreted. Responsible for the anti Gram-negative activity of immune hemolymph of Z.atratus. The polypeptide is Coleoptericin (Zophobas atratus (Giant mealworm beetle)).